Consider the following 835-residue polypeptide: Invasin (835 aa).

Residues V451 to A541 form the Big-1 domain.

This sequence belongs to the intimin/invasin family.

The protein localises to the cell outer membrane. Invasin is a protein that allows enteric bacteria to penetrate cultured mammalian cells. The entry of invasin in the cell is mediated by binding several beta-1 chain integrins. In Yersinia enterocolitica, this protein is Invasin.